The chain runs to 427 residues: Peptidase B (427 aa).

Mn(2+)-binding residues include Lys-195 and Asp-200. The active site involves Lys-207. Residues Asp-218, Asp-277, and Glu-279 each contribute to the Mn(2+) site. Residue Arg-281 is part of the active site.

The protein belongs to the peptidase M17 family. As to quaternary structure, homohexamer. The cofactor is Mn(2+).

Its subcellular location is the cytoplasm. It catalyses the reaction Release of an N-terminal amino acid, Xaa, from a peptide or arylamide. Xaa is preferably Glu or Asp but may be other amino acids, including Leu, Met, His, Cys and Gln.. Functionally, probably plays an important role in intracellular peptide degradation. This chain is Peptidase B, found in Salmonella arizonae (strain ATCC BAA-731 / CDC346-86 / RSK2980).